Consider the following 140-residue polypeptide: MTYVILPLEMKKGRGYVYQLEYHLIWCVKYRHQVLVGEVADGLKDILRDIAAQNGLEVITMEVMPDHVHLLLSATPQQAIPDFVKALKGASARRMFVAYPQLKEKLWGGNLWNPSYCILTVSENTRAQIQKYIESQHDKE.

Mg(2+) is bound by residues His-67 and His-69. Residues 127 to 133 (AQIQKYI) form a mobile alpha helix region. Tyr-132 functions as the Nucleophile in the catalytic mechanism. Gln-136 is a binding site for Mg(2+).

This sequence belongs to the transposase 17 family. In terms of assembly, homodimer. The cofactor is Mg(2+).

Both the excision and insertion steps are inhibited by TnpB. In terms of biological role, a transposase that is part of insertion sequence (IS) element ISDra2, it is necessary and sufficient for both transposon excision and insertion of ISDra2. This protein alone can be provided in trans and allows transposition of an empty IS element (tnpA or tnpA-tnpB replaced by a selectable marker). ISDra2 binds subterminal imperfect palindromes at the left (LE) and right (RE) ends of the element and cleaves only the 'top strand' which is circularized and subsequently reinserted into the DNA target. This is called a 'peel and paste' mechanism and increases the copy number of the IS. Transposition is linked to DNA replication in the absence of irradiation, with maximal activity when the 'top strand' is on the replication lagging strand, and occurs preferentially on the lagging strand. The IS element inserts 3' of the target sequence 5'-TTGAT-3'; target duplication has not been observed. This Deinococcus radiodurans (strain ATCC 13939 / DSM 20539 / JCM 16871 / CCUG 27074 / LMG 4051 / NBRC 15346 / NCIMB 9279 / VKM B-1422 / R1) protein is ISDra2 transposase TnpA.